Here is a 1115-residue protein sequence, read N- to C-terminus: Rho GTPase-activating protein gacW (1115 aa).

Residues 661-691 are disordered; that stretch reads PPIGPPSTPTKSSNPGFQTLPKRPTRGPLYP. In terms of domain architecture, Rho-GAP spans 699 to 880; sequence VTLTDKAQIN…FMIVNYFDIF (182 aa). 2 disordered regions span residues 888–1065 and 1092–1115; these read SSDN…GDGK and ESRT…GPSL. Low complexity predominate over residues 898-929; it reads DSTQSTCTTNNNNLVATSLSSPISPSTTPTKS. Composition is skewed to polar residues over residues 934-943 and 959-990; these read LHTTVEVSRS and RPIS…SRPS. The segment covering 1013-1046 has biased composition (low complexity); the sequence is SNHSSSGQLNNNNSNNNTTSNSSNSSSGKSSSNP.

The protein localises to the cytoplasm. Rho GTPase-activating protein involved in the signal transduction pathway. In Dictyostelium discoideum (Social amoeba), this protein is Rho GTPase-activating protein gacW (gacW).